Here is a 114-residue protein sequence, read N- to C-terminus: Early 4 ORF4 protein (114 aa).

The Nuclear localization signal motif lies at 66–75 (RAKRRDRRRR).

It belongs to the adenoviridae E4 ORF4 family. As to quaternary structure, interacts with host BAZ1A/ACF1, host PPP2R2A/PP2a-B55alpha subunit, and host PPP2R5E/PP2a-B'B56 subunit. May interact with host SRC. May be phosphorylated by host SRC kinase.

It is found in the host nucleus. The protein localises to the host cytoplasm. Plays a role in viral alternative pre-mRNA splicing. Activates dephosphorylation by protein phosphatase 2A of host SR proteins and converts their splicing properties. When expressed alone ex vivo, induces p53/TP53-independent apoptosis called cytoplasmic death. May mimic nutrient/growth signals to activate the host mTOR pathway. The sequence is that of Early 4 ORF4 protein from Homo sapiens (Human).